The following is a 453-amino-acid chain: Choline kinase alpha (453 aa).

A disordered region spans residues 22-81; sequence CGGNAAPTPGVGQQRDAAGELESKQLGGRTQPLALPPPPPPPLPLPPPPSPPLADEQPEP. Positions 55–73 are enriched in pro residues; that stretch reads ALPPPPPPPLPLPPPPSPP. Ser71 bears the Phosphoserine mark. ATP is bound by residues 113–119, Arg142, and 203–209; these read RGGLSNM and QFIPSRR. Position 115–117 (115–117) interacts with phosphocholine; the sequence is GLS. The residue at position 243 (Lys243) is an N6-acetyllysine. Phosphoserine is present on Ser275. ATP is bound by residues Gln304 and Asp326.

Belongs to the choline/ethanolamine kinase family. Homodimer. Heterodimer with CHKB. As to quaternary structure, monomer; acetylation by KAT5 promotes dissociation of the homodimer and monomerization. In terms of processing, phosphorylated at Ser-275 by AMPK in response to glucose deprivation, leading to localization to lipid droplets. Post-translationally, acetylated by KAT5 at Lys-243 following phosphorylation by AMPK, leading to monomerization and conversion into a tyrosine-protein kinase. As to expression, expressed ubiquitously with the highest level in testis.

The protein resides in the cytoplasm. The protein localises to the cytosol. Its subcellular location is the lipid droplet. It carries out the reaction choline + ATP = phosphocholine + ADP + H(+). The enzyme catalyses ethanolamine + ATP = phosphoethanolamine + ADP + H(+). The catalysed reaction is L-tyrosyl-[protein] + ATP = O-phospho-L-tyrosyl-[protein] + ADP + H(+). It participates in phospholipid metabolism; phosphatidylcholine biosynthesis; phosphocholine from choline: step 1/1. The protein operates within phospholipid metabolism; phosphatidylethanolamine biosynthesis; phosphatidylethanolamine from ethanolamine: step 1/3. Functionally, plays a key role in phospholipid biosynthesis by catalyzing the phosphorylation of free choline to phosphocholine, the first step in phosphatidylcholine biosynthesis. Also phosphorylates ethanolamine, thereby contributing to phosphatidylethanolamine biosynthesis. Has higher activity with choline. This isoform plays a key role in lipolysis of lipid droplets following glucose deprivation. In response to glucose deprivation, phosphorylated by AMPK, promoting localization to lipid droplets. Phosphorylation is followed by acetylation by KAT5, leading to dissociation of the homodimer into a monomer. Monomeric CHKA isoform 1 is converted into a tyrosine-protein kinase, which phosphorylates lipid droplet structural proteins PLIN2 and PLIN3, leading to lipolysis of lipid droplets. This chain is Choline kinase alpha (Chka), found in Mus musculus (Mouse).